Here is a 368-residue protein sequence, read N- to C-terminus: Peptide chain release factor 2 (368 aa).

Residue glutamine 251 is modified to N5-methylglutamine.

This sequence belongs to the prokaryotic/mitochondrial release factor family. Post-translationally, methylated by PrmC. Methylation increases the termination efficiency of RF2.

It localises to the cytoplasm. In terms of biological role, peptide chain release factor 2 directs the termination of translation in response to the peptide chain termination codons UGA and UAA. The sequence is that of Peptide chain release factor 2 from Nitratiruptor sp. (strain SB155-2).